The chain runs to 83 residues: Small ribosomal subunit protein eS21 (83 aa).

Belongs to the eukaryotic ribosomal protein eS21 family. In terms of assembly, component of the 40S small ribosomal subunit. Interacts with sta.

It localises to the cytoplasm. Its subcellular location is the cytosol. The protein resides in the rough endoplasmic reticulum. The chain is Small ribosomal subunit protein eS21 (RpS21) from Ceratitis capitata (Mediterranean fruit fly).